The chain runs to 308 residues: Aspartate carbamoyltransferase catalytic subunit (308 aa).

The carbamoyl phosphate site is built by Arg-49 and Thr-50. Residue Lys-77 participates in L-aspartate binding. Positions 99, 127, and 130 each coordinate carbamoyl phosphate. Residues Arg-160 and Arg-211 each coordinate L-aspartate. The carbamoyl phosphate site is built by Ala-252 and Pro-253.

This sequence belongs to the aspartate/ornithine carbamoyltransferase superfamily. ATCase family. As to quaternary structure, heterododecamer (2C3:3R2) of six catalytic PyrB chains organized as two trimers (C3), and six regulatory PyrI chains organized as three dimers (R2).

It carries out the reaction carbamoyl phosphate + L-aspartate = N-carbamoyl-L-aspartate + phosphate + H(+). The protein operates within pyrimidine metabolism; UMP biosynthesis via de novo pathway; (S)-dihydroorotate from bicarbonate: step 2/3. In terms of biological role, catalyzes the condensation of carbamoyl phosphate and aspartate to form carbamoyl aspartate and inorganic phosphate, the committed step in the de novo pyrimidine nucleotide biosynthesis pathway. This chain is Aspartate carbamoyltransferase catalytic subunit, found in Geobacillus thermodenitrificans (strain NG80-2).